The primary structure comprises 118 residues: Large ribosomal subunit protein bL20 (118 aa).

This sequence belongs to the bacterial ribosomal protein bL20 family.

In terms of biological role, binds directly to 23S ribosomal RNA and is necessary for the in vitro assembly process of the 50S ribosomal subunit. It is not involved in the protein synthesizing functions of that subunit. The protein is Large ribosomal subunit protein bL20 of Syntrophotalea carbinolica (strain DSM 2380 / NBRC 103641 / GraBd1) (Pelobacter carbinolicus).